We begin with the raw amino-acid sequence, 576 residues long: Lysine--tRNA ligase (576 aa).

Mg(2+) contacts are provided by E412 and E419.

This sequence belongs to the class-II aminoacyl-tRNA synthetase family. As to quaternary structure, homodimer. It depends on Mg(2+) as a cofactor.

It localises to the cytoplasm. It catalyses the reaction tRNA(Lys) + L-lysine + ATP = L-lysyl-tRNA(Lys) + AMP + diphosphate. In Parabacteroides distasonis (strain ATCC 8503 / DSM 20701 / CIP 104284 / JCM 5825 / NCTC 11152), this protein is Lysine--tRNA ligase.